The chain runs to 530 residues: Glucose-6-phosphate isomerase (530 aa).

The Proton donor role is filled by Glu-356. Catalysis depends on residues His-387 and Lys-502.

It belongs to the GPI family.

It localises to the cytoplasm. The enzyme catalyses alpha-D-glucose 6-phosphate = beta-D-fructose 6-phosphate. Its pathway is carbohydrate biosynthesis; gluconeogenesis. It participates in carbohydrate degradation; glycolysis; D-glyceraldehyde 3-phosphate and glycerone phosphate from D-glucose: step 2/4. Catalyzes the reversible isomerization of glucose-6-phosphate to fructose-6-phosphate. The chain is Glucose-6-phosphate isomerase from Borreliella afzelii (strain PKo) (Borrelia afzelii).